A 209-amino-acid polypeptide reads, in one-letter code: Uracil phosphoribosyltransferase (209 aa).

5-phospho-alpha-D-ribose 1-diphosphate contacts are provided by residues Arg-79, Arg-104, and 131-139 (DPMLATGNS). Uracil contacts are provided by residues Ile-194 and 199–201 (GDA). Asp-200 serves as a coordination point for 5-phospho-alpha-D-ribose 1-diphosphate.

This sequence belongs to the UPRTase family. Mg(2+) is required as a cofactor.

The enzyme catalyses UMP + diphosphate = 5-phospho-alpha-D-ribose 1-diphosphate + uracil. It participates in pyrimidine metabolism; UMP biosynthesis via salvage pathway; UMP from uracil: step 1/1. Allosterically activated by GTP. In terms of biological role, catalyzes the conversion of uracil and 5-phospho-alpha-D-ribose 1-diphosphate (PRPP) to UMP and diphosphate. The sequence is that of Uracil phosphoribosyltransferase from Acidovorax ebreus (strain TPSY) (Diaphorobacter sp. (strain TPSY)).